The sequence spans 441 residues: Protein C-ets-1 (441 aa).

Residues Lys8 and Lys15 each carry the N6-acetyllysine; alternate modification. Glycyl lysine isopeptide (Lys-Gly) (interchain with G-Cter in SUMO2); alternate cross-links involve residues Lys8 and Lys15. Lys15 is covalently cross-linked (Glycyl lysine isopeptide (Lys-Gly) (interchain with G-Cter in SUMO); alternate). At Thr38 the chain carries Phosphothreonine; by MAPK. One can recognise a PNT domain in the interval 51-136; sequence ATFSGFTKEQ…EHLEILQKED (86 aa). Residues 130–243 are activation domain; required for transcription activation; that stretch reads EILQKEDVKP…DNMCMGRASR (114 aa). A Glycyl lysine isopeptide (Lys-Gly) (interchain with G-Cter in SUMO2) cross-link involves residue Lys138. Position 223 is a phosphotyrosine (Tyr223). A Glycyl lysine isopeptide (Lys-Gly) (interchain with G-Cter in SUMO) cross-link involves residue Lys227. 2 positions are modified to phosphoserine: Ser251 and Ser254. Phosphothreonine is present on Thr265. A phosphoserine mark is found at Ser267, Ser270, Ser282, and Ser285. A helix HI-1 region spans residues 304-312; sequence FKDYVRDRA. N6-acetyllysine is present on Lys305. The segment at 323–330 is helix HI-2; sequence AAALAGYT. Positions 335 to 415 form a DNA-binding region, ETS; the sequence is IQLWQFLLEL…AGKRYVYRFV (81 aa). The tract at residues 418–422 is helix H4; the sequence is LQSLL. The interval 426-432 is helix H5; it reads PEELHAM.

Belongs to the ETS family. In terms of assembly, binds DNA as a homodimer; homodimerization is required for transcription activation. Interacts with MAF and MAFB. Interacts with PAX5; the interaction alters DNA-binding properties. Interacts with DAXX. Interacts with UBE2I. Interacts with SP100; the interaction is direct and modulates ETS1 transcriptional activity. In terms of processing, sumoylated on Lys-15 and Lys-227, preferentially with SUMO2; which inhibits transcriptional activity. Ubiquitinated; which induces proteasomal degradation. Post-translationally, phosphorylation at Ser-251, Ser-282 and Ser-285 by CaMK2/CaMKII in response to calcium signaling decreases affinity for DNA: an increasing number of phosphoserines causes DNA-binding to become progressively weaker.

The protein resides in the nucleus. It is found in the cytoplasm. Autoinhibited by a module composed of four alpha helices (HI-1, HI-2, H4, and H5) that flank the DNA-binding ETS domain, reducing the affinity for DNA. Phosphorylation by CaMK2/CaMKII in response to calcium signaling decreases affinity for DNA. In terms of biological role, transcription factor. Directly controls the expression of cytokine and chemokine genes in a wide variety of different cellular contexts. May control the differentiation, survival and proliferation of lymphoid cells. May also regulate angiogenesis through regulation of expression of genes controlling endothelial cell migration and invasion. The sequence is that of Protein C-ets-1 (Ets1) from Rattus norvegicus (Rat).